Here is a 501-residue protein sequence, read N- to C-terminus: ATP synthase subunit beta (501 aa).

ATP is bound at residue 153-160 (GGAGVGKT).

It belongs to the ATPase alpha/beta chains family. F-type ATPases have 2 components, CF(1) - the catalytic core - and CF(0) - the membrane proton channel. CF(1) has five subunits: alpha(3), beta(3), gamma(1), delta(1), epsilon(1). CF(0) has three main subunits: a(1), b(2) and c(9-12). The alpha and beta chains form an alternating ring which encloses part of the gamma chain. CF(1) is attached to CF(0) by a central stalk formed by the gamma and epsilon chains, while a peripheral stalk is formed by the delta and b chains.

It localises to the cell inner membrane. The catalysed reaction is ATP + H2O + 4 H(+)(in) = ADP + phosphate + 5 H(+)(out). Its function is as follows. Produces ATP from ADP in the presence of a proton gradient across the membrane. The catalytic sites are hosted primarily by the beta subunits. The chain is ATP synthase subunit beta from Cytophaga hutchinsonii (strain ATCC 33406 / DSM 1761 / CIP 103989 / NBRC 15051 / NCIMB 9469 / D465).